The chain runs to 316 residues: Retron Ec73 reverse transcriptase (316 aa).

One can recognise a Reverse transcriptase domain in the interval 1 to 243 (MRIYSLIDSQ…GSIVVTGLKV (243 aa)). 3 residues coordinate Mg(2+): Asp-99, Asp-189, and Asp-190. The interval 247 to 316 (FHITLHRSMK…WIQNLHNKVE (70 aa)) is necessary and required for recognition and binding of RNA.

The protein belongs to the bacterial reverse transcriptase family.

It catalyses the reaction DNA(n) + a 2'-deoxyribonucleoside 5'-triphosphate = DNA(n+1) + diphosphate. In terms of biological role, reverse transcriptase (RT) component of antiviral defense system retron Ec73, composed of a non-coding RNA (ncRNA) followed by a ribosyltransferase/DNA-binding protein then a reverse transcriptase (RT). Expression of this retron confers protection against bacteriophages SECphi4, SECphi6, SECphi27 and P1. At multiplicity of infection (MOI) of 0.02 cultures grow normally when infected with SECphi4 without collapsing, at MOI 2 cultures enter growth stasis. Responsible for synthesis of msDNA-Ec73 (a branched molecule with RNA linked by a 2',5'-phosphodiester bond to ssDNA). The retron transcript serves as primer (from a conserved internal G residue) and template for the reaction, and codes for the RT. Recognizes only its cognate RNA as a primer template. In Escherichia coli, this protein is Retron Ec73 reverse transcriptase.